The primary structure comprises 222 residues: UPF0688 protein C1orf174 homolog (222 aa).

2 disordered regions span residues 23 to 57 (STSLASAGDIASSTSAKTTCLASSSHKATDRRTSK) and 98 to 158 (EDGA…EPVP). A compositionally biased stretch (polar residues) spans 33 to 48 (ASSTSAKTTCLASSSH). Residues 121–131 (VSEEPSVKAEE) are compositionally biased toward basic and acidic residues. The residue at position 172 (serine 172) is a Phosphoserine.

Belongs to the UPF0688 family.

The protein localises to the nucleus. In Rattus norvegicus (Rat), this protein is UPF0688 protein C1orf174 homolog.